A 270-amino-acid polypeptide reads, in one-letter code: Cross-pathway control protein 1 (270 aa).

Disordered regions lie at residues 114 to 135 (QAQA…QTQP) and 153 to 213 (QTVH…IIVE). Residues 184–195 (SVSPPSGRHSSV) show a composition bias toward low complexity. The region spanning 216–270 (SDVVAMKRARNTLAARKSRERKAQRLEELEAKIEELIAERDRWKNLALAHGASTE) is the bZIP domain. The basic motif stretch occupies residues 222 to 240 (KRARNTLAARKSRERKAQR). The leucine-zipper stretch occupies residues 241-248 (LEELEAKI).

It belongs to the bZIP family. GCN4 subfamily. In terms of assembly, binds DNA as a dimer.

The protein localises to the nucleus. In terms of biological role, in N.crassa grown under amino acid starvation conditions, this protein is required for increasing the transcription of the genes coding for many amino acid biosynthetic pathways enzymes. This transcription factor binds and recognize the DNA sequence: 5'-TGACTC-3'. This chain is Cross-pathway control protein 1 (cpc-1), found in Neurospora crassa (strain ATCC 24698 / 74-OR23-1A / CBS 708.71 / DSM 1257 / FGSC 987).